Consider the following 83-residue polypeptide: Protein ShK-like4 (83 aa).

Residues 1-21 (MDTRVIAVLFVAIMVLSSTNA) form the signal peptide. Residues 22-48 (LPKQKGSYKNMNHADFLKGLDRASSKR) constitute a propeptide that is removed on maturation. 3 cysteine pairs are disulfide-bonded: C50–C82, C57–C75, and C67–C79. The 34-residue stretch at 50-83 (CRDSHWSCFFQSNYEDICSTAQAEECALSCGLCE) folds into the ShKT domain.

Contains 3 disulfide bonds. As to expression, expressed in various neurons (ectodermal sensory cells) (in planulae and primary polyps). Not expressed in nematocytes.

Its function is as follows. Probable neuropeptide. The sequence is that of Protein ShK-like4 from Nematostella vectensis (Starlet sea anemone).